Reading from the N-terminus, the 340-residue chain is MTENALLLLNLGSPDSTRVEDVRRYLDQFLMDPYVVDLPWPLRRLLVSLILIKRPAESAHAYSSIWWDEGSPLIVLSRRLQEAMKPHWPHGPVELAMRYGQPAIEKVLLDLARRGIRRVTLAPLYPQFADSTTTTAEQEVRRVIAAHRLGLEVSTLPPFYDQPVYLDALVESVRPYLQQPHDHLLLSFHGLPERHIRKLVKDPAHDLLAENSRNVSPEALALCYRSQCLRTAEAFAERAGLEQGRWSVSFQSRLGRAKWIEPYTDAKLDELVQRGVKRLLVMCPAFVADCIETLEEIGMRGREQFISAGGEDLVLIPCLNDHPAWVGALAEMSGRLARPL.

Positions 189 and 292 each coordinate Fe cation.

The protein belongs to the ferrochelatase family.

The protein localises to the cytoplasm. It carries out the reaction heme b + 2 H(+) = protoporphyrin IX + Fe(2+). The protein operates within porphyrin-containing compound metabolism; protoheme biosynthesis; protoheme from protoporphyrin-IX: step 1/1. Functionally, catalyzes the ferrous insertion into protoporphyrin IX. In Pseudomonas aeruginosa (strain LESB58), this protein is Ferrochelatase.